We begin with the raw amino-acid sequence, 194 residues long: Calcium channel flower (194 aa).

At 1–34 the chain is on the cytoplasmic side; sequence MSFAEKITGLLARPNQQDPIGPEQPWYLKYGSRL. The helical transmembrane segment at 35–55 threads the bilayer; that stretch reads LGIVAAFFAILFGLWNVFSII. Over 56-65 the chain is Extracellular; it reads TLSVSCLVAG. Residues 66–88 traverse the membrane as a helical segment; the sequence is ILQMVAGFVVMLLEAPCCFVCFG. Over 89–106 the chain is Cytoplasmic; sequence QVNEIAEKVESKPLYFRA. A helical membrane pass occupies residues 107 to 127; the sequence is GLYIAMAIPPIILCFGLASLF. At 128–194 the chain is on the extracellular side; that stretch reads GSGLIFGTGV…TGAVGTDSNV (67 aa). Important for promoting apoptosis stretches follow at residues 135–157 and 135–192; these read TGVV…RAAA and TGVV…GTDS.

The protein belongs to the calcium channel flower family. As to quaternary structure, associates with the dally/ magu complex. Homomultimer. Associates with the dally/ magu complex. Detected in the imaginal wing disk (at protein level). As to expression, detected throughout the adult brain, including the optic lobe but, at much lower levels of expression than isoform Lose-A. In terms of tissue distribution, detected in the optic lobe (at protein level). Detected throughout the adult brain, including the optic lobe. Expressed in damaged and undamaged optic lobe neurons. Expressed in optic lobe neurons, with higher levels of expression in suboptimal neurons. Specifically expressed in injury-damaged optic lobe neurons.

It is found in the cell membrane. The protein resides in the cytoplasmic vesicle. The protein localises to the secretory vesicle. It localises to the synaptic vesicle membrane. Its subcellular location is the presynaptic cell membrane. It is found in the endosome. The protein resides in the synaptic vesicle. Its activity is regulated as follows. Channel activity is inhibited by La(3+), which reduces Ca(2+) influx and thus inhibits it's function in promoting activity-dependent bulk endocytosis (ADBE) in response to high stimuli. In terms of biological role, transmembrane protein which mediates synaptic endocytosis, fitness-based cell culling, neuronal culling, morphogen gradient scaling, and calcium transport. Regulates synaptic endocytosis and hence couples exo- with endocytosis. Controls two major modes of synaptic vesicle (SV) endocytosis in the synaptic boutons of neuromuscular junctions (NMJs); Ca(2+) channel-independent Clathrin-mediated endocytosis (CME) in response to mild stimulation, and Ca(2+) channel-dependent activity-dependent bulk endocytosis (ADBE) in response to strong stimulation. Functions in ADBE and subsequent SV reformation from bulk endosomes by initiating Ca(2+) channel-dependent phosphatidylinositol 4,5-bisphosphate (PtdIns(4,5)P2) compartmentalization in synaptic boutons. There it acts at the periactive zone to provide the low Ca(2+) levels required to initiate Calcineurin activation and upregulate PtdIns(4,5)P2. Conversely PtdIns(4,5)P2 enhances fwe Ca(2+) channel-activity, establishing a positive feedback loop that induces PtdIns(4,5)P2 microdomain at the periactive zone. These microdomains trigger bulk membrane invagination (i.e. ADBE) by triggering actin polymerization while also promoting localization of fwe to bulk endosomes, thereby removing the ADBE trigger to reduce endocytosis and prevent excess membrane uptake. PtdIns(4,5)P2 then promotes SV reformation from the bulk endosomes, to coordinate ADBE and subsequent SV reformation. Different combinations of the flower isoforms at the cell membrane are also required for the identification and elimination of suboptimal or supernumerary cells during development, regeneration, and adulthood. Required for the recognition and elimination of unfit cells in the developing wing during cell competition. Also required for efficient identification and elimination of injured, damaged and/or dysfunctional neurons during regeneration of the adult brain. In the developing pupal retina, mediates the elimination of unwanted postmitotic neurons, including supernumerary photoreceptor neurons that form at the periphery of the retina and are contained within incomplete ommatidia units. Downstream of the flower fitness fingerprints, cells identified as unwanted or unfit are eliminated via apoptosis through the expression of ahuizotl (azot). However, the cells marked for elimination by the flower isoforms only undergo apoptosis if additional thresholds are met; (1) their neighboring fit/healthy cells express different levels of the fwe isoforms, and (2) the levels of the protective signal SPARC expressed by the loser or unwanted cells are unable to inhibit caspase activation. These additional thresholds for flower-mediated apoptosis, allows useful cells to recover from transient and limited stress before they are unnecessarily eliminated. Functions with dally and magu in a mechanism of scaling, which utilises apoptosis to ensure that the dpp morphogen gradient, which mediates organ growth, remains proportional to the size of the growing wing. In this mechanism, fwe represses dally- and Magu-dependent activity in expanding the gradient, and dally/Magu inhibits fwe-dependent apoptosis to keep cell death rate low. When the levels of these different proteins are optimally regulated the gradient correctly scales with organ growth but when this fails, fwe-mediated apoptosis is activated to trim the developing tissue to match the correct size of the gradient. Its function is as follows. Functions with the other flower isoforms to produce tissue-specific fitness fingerprints that identify unfit or fit cells during cell selection processes in order to maintain tissue health. In the wing imaginal disk, this isoform is highly expressed in healthy/normal cells but is down-regulated in cells with decreased fitness. During cell competition, if levels of this isoform in unfit cells is lower than in the surrounding neighboring cells, the suboptimal cells are recognized as 'loser' cells, and undergo elimination via apoptosis to be replaced by the surrounding healthy 'winner' cell population. Functionally, functions with the other flower isoforms to produce tissue-specific fitness fingerprints that identify unfit or fit cells during cell selection processes in order to maintain tissue health. In the wing imaginal disk, this isoform displays low levels of expression in healthy/normal cells but is up-regulated in cells with decreased fitness. During cell competition, if levels of this isoform in unfit cells is higher than in the surrounding neighboring cells, the suboptimal cells are recognized as 'loser' cells, and undergo elimination via apoptosis to be replaced by the surrounding healthy 'winner' cell population. Functions with the other flower isoforms to produce tissue-specific fitness fingerprints that identify unfit cells for cell selection processes during development, regeneration, and to maintain tissue health. During cell competition in certain tissues, marks suboptimal or damaged cells as 'loser' cells. In cells of the wing imaginal disk and damaged or dysfunctional neurons in the adult optic lobe, this isoform displays low to no expression in healthy/normal cells but is up-regulated in cells with decreased fitness or damage-affected neurons. During cell competition, if levels of this isoform in unfit cells is higher than in the surrounding neighboring cells, the suboptimal cells are recognized as 'loser' cells, and undergo elimination via apoptosis to be replaced by the surrounding healthy/undamaged 'winner' cell population. In the developing pupal retina, also required for the recognition and elimination of postmitotic neurons, including supernumerary photoreceptor neurons that form at the periphery of the retina and are contained within incomplete ommatidia units. Activity at the peripheral retina is induced by the wg signaling pathway but, once activated, it promotes apoptosis of supernumerary photoreceptor neurons independently of wg signaling and snail function. The sequence is that of Calcium channel flower (fwe) from Drosophila melanogaster (Fruit fly).